The following is a 223-amino-acid chain: Holliday junction branch migration complex subunit RuvA (223 aa).

Positions 1–64 are domain I; it reads MIGRIAGVIL…EDLLQLFGFP (64 aa). Residues 65 to 143 are domain II; it reads TLLEKEWHRL…AVMALGGALT (79 aa). The interval 144 to 169 is flexible linker; the sequence is VDPGPLPEVELVEAAVPAPVPAKAAP. Positions 170-223 are domain III; it reads SSAQATADALSALGNLGYAPSEAASAVAEAAAREPAAPTAALIRAALRLLAPKE.

Belongs to the RuvA family. As to quaternary structure, homotetramer. Forms an RuvA(8)-RuvB(12)-Holliday junction (HJ) complex. HJ DNA is sandwiched between 2 RuvA tetramers; dsDNA enters through RuvA and exits via RuvB. An RuvB hexamer assembles on each DNA strand where it exits the tetramer. Each RuvB hexamer is contacted by two RuvA subunits (via domain III) on 2 adjacent RuvB subunits; this complex drives branch migration. In the full resolvosome a probable DNA-RuvA(4)-RuvB(12)-RuvC(2) complex forms which resolves the HJ.

Its subcellular location is the cytoplasm. Functionally, the RuvA-RuvB-RuvC complex processes Holliday junction (HJ) DNA during genetic recombination and DNA repair, while the RuvA-RuvB complex plays an important role in the rescue of blocked DNA replication forks via replication fork reversal (RFR). RuvA specifically binds to HJ cruciform DNA, conferring on it an open structure. The RuvB hexamer acts as an ATP-dependent pump, pulling dsDNA into and through the RuvAB complex. HJ branch migration allows RuvC to scan DNA until it finds its consensus sequence, where it cleaves and resolves the cruciform DNA. This is Holliday junction branch migration complex subunit RuvA from Paracoccus denitrificans (strain Pd 1222).